Reading from the N-terminus, the 152-residue chain is Sec-independent protein translocase protein TatB (152 aa).

A helical transmembrane segment spans residues 1–21 (MLDVGFGELFCFGIIALLVLG).

Belongs to the TatB family. In terms of assembly, the Tat system comprises two distinct complexes: a TatABC complex, containing multiple copies of TatA, TatB and TatC subunits, and a separate TatA complex, containing only TatA subunits. Substrates initially bind to the TatABC complex, which probably triggers association of the separate TatA complex to form the active translocon.

It localises to the cell inner membrane. In terms of biological role, part of the twin-arginine translocation (Tat) system that transports large folded proteins containing a characteristic twin-arginine motif in their signal peptide across membranes. Together with TatC, TatB is part of a receptor directly interacting with Tat signal peptides. TatB may form an oligomeric binding site that transiently accommodates folded Tat precursor proteins before their translocation. This chain is Sec-independent protein translocase protein TatB, found in Acinetobacter baylyi (strain ATCC 33305 / BD413 / ADP1).